A 480-amino-acid chain; its full sequence is Probable tRNA N6-adenosine threonylcarbamoyltransferase, mitochondrial (480 aa).

The transit peptide at 1-86 directs the protein to the mitochondrion; that stretch reads MVRLFLTLSP…NPNFDDNLVV (86 aa). A divalent metal cation contacts are provided by H194 and H198. Residues 217–221, D250, G265, E269, 373–374, and T401 each bind substrate; these read LISGG and SN. An a divalent metal cation-binding site is contributed by D402.

It belongs to the KAE1 / TsaD family. In terms of assembly, homodimer. A divalent metal cation serves as cofactor. As to expression, expressed in young developing leaves, roots, flowers and siliques.

The protein localises to the mitochondrion inner membrane. It carries out the reaction L-threonylcarbamoyladenylate + adenosine(37) in tRNA = N(6)-L-threonylcarbamoyladenosine(37) in tRNA + AMP + H(+). Required for the formation of a threonylcarbamoyl group on adenosine at position 37 (t(6)A37) in mitochondrial tRNAs that read codons beginning with adenine. Probably involved in the transfer of the threonylcarbamoyl moiety of threonylcarbamoyl-AMP (TC-AMP) to the N6 group of A37. Involved in mitochondrial genome maintenance. May have a role in embryonic development in plants. This is Probable tRNA N6-adenosine threonylcarbamoyltransferase, mitochondrial from Arabidopsis thaliana (Mouse-ear cress).